The chain runs to 264 residues: 3-methyl-2-oxobutanoate hydroxymethyltransferase (264 aa).

D45 and D84 together coordinate Mg(2+). Residues 45–46, D84, and K113 contribute to the 3-methyl-2-oxobutanoate site; that span reads DS. E115 contributes to the Mg(2+) binding site. Residue E182 is the Proton acceptor of the active site.

It belongs to the PanB family. As to quaternary structure, homodecamer; pentamer of dimers. Requires Mg(2+) as cofactor.

Its subcellular location is the cytoplasm. The enzyme catalyses 3-methyl-2-oxobutanoate + (6R)-5,10-methylene-5,6,7,8-tetrahydrofolate + H2O = 2-dehydropantoate + (6S)-5,6,7,8-tetrahydrofolate. It participates in cofactor biosynthesis; (R)-pantothenate biosynthesis; (R)-pantoate from 3-methyl-2-oxobutanoate: step 1/2. In terms of biological role, catalyzes the reversible reaction in which hydroxymethyl group from 5,10-methylenetetrahydrofolate is transferred onto alpha-ketoisovalerate to form ketopantoate. The chain is 3-methyl-2-oxobutanoate hydroxymethyltransferase from Helicobacter hepaticus (strain ATCC 51449 / 3B1).